Here is a 274-residue protein sequence, read N- to C-terminus: MYRVFDKLASRPFVSLPGIQLIAKMPLSDLNKLPPLADQLEQAKRIAAYRAVDENFDAKTHKVVGVGSGTTVVYVAERLGEYMDEKTNFVCIPTGFQSKQLILSNKLQLGVIEQFPEVDIAFDGADEVDAGLQLIKGGGACLFQEKLVSTSAKKFIVVADSRKKSPKYLGTNWKKGVPIEVVPSSYVRVLSDLKNKLNCKSAMVRQGGSAKAGPVVTDNCNFIIDADFGEITDPRKLHQDIKLLVGVVETGLFIDNAEKAYFGYPDGSVDLQEL.

The protein belongs to the ribose 5-phosphate isomerase family.

The protein localises to the cytoplasm. It catalyses the reaction aldehydo-D-ribose 5-phosphate = D-ribulose 5-phosphate. It functions in the pathway carbohydrate degradation; pentose phosphate pathway; D-ribose 5-phosphate from D-ribulose 5-phosphate (non-oxidative stage): step 1/1. This Kluyveromyces lactis (strain ATCC 8585 / CBS 2359 / DSM 70799 / NBRC 1267 / NRRL Y-1140 / WM37) (Yeast) protein is Ribose-5-phosphate isomerase (RKI1).